The following is a 187-amino-acid chain: Lipid A acyltransferase PagP (187 aa).

Positions 1–26 (MIVAKKYFLVLSFLFVQFALLPQAFS) are cleaved as a signal peptide. Residues His59, Asp102, and Ser103 contribute to the active site.

This sequence belongs to the lipid A palmitoyltransferase family. In terms of assembly, homodimer.

It localises to the cell outer membrane. The catalysed reaction is a lipid A + a 1,2-diacyl-sn-glycero-3-phosphocholine = a hepta-acyl lipid A + a 2-acyl-sn-glycero-3-phosphocholine. The enzyme catalyses a lipid IVA + a 1,2-diacyl-sn-glycero-3-phosphocholine = a lipid IVB + a 2-acyl-sn-glycero-3-phosphocholine. It catalyses the reaction a lipid IIA + a 1,2-diacyl-sn-glycero-3-phosphocholine = a lipid IIB + a 2-acyl-sn-glycero-3-phosphocholine. Functionally, transfers a fatty acid residue from the sn-1 position of a phospholipid to the N-linked hydroxyfatty acid chain on the proximal unit of lipid A or its precursors. In Citrobacter koseri (strain ATCC BAA-895 / CDC 4225-83 / SGSC4696), this protein is Lipid A acyltransferase PagP.